A 185-amino-acid polypeptide reads, in one-letter code: Prorelaxin 1 (185 aa).

The N-terminal stretch at 1 to 22 (MSSRFLLQLLGFWLLLSQPCRT) is a signal peptide. Cystine bridges form between cysteine 36–cysteine 171, cysteine 48–cysteine 185, and cysteine 170–cysteine 175. A propeptide spans 58–156 (SQEEPALLAR…LKYLQSDTHS (99 aa)) (connecting peptide). Residues 135-161 (RLGEAEDGSPPGLKYLQSDTHSRKKRE) form a disordered region.

It belongs to the insulin family. As to quaternary structure, heterodimer of a B chain and an A chain linked by two disulfide bonds.

The protein resides in the secreted. Functionally, relaxin is an ovarian hormone that acts with estrogen to produce dilatation of the birth canal in many mammals. In Mus musculus (Mouse), this protein is Prorelaxin 1 (Rln1).